The sequence spans 168 residues: ATP synthase subunit b (168 aa).

Residues 10 to 30 (STILGNFILVTASFAVLIILI) form a helical membrane-spanning segment.

It belongs to the ATPase B chain family. In terms of assembly, F-type ATPases have 2 components, F(1) - the catalytic core - and F(0) - the membrane proton channel. F(1) has five subunits: alpha(3), beta(3), gamma(1), delta(1), epsilon(1). F(0) has three main subunits: a(1), b(2) and c(10-14). The alpha and beta chains form an alternating ring which encloses part of the gamma chain. F(1) is attached to F(0) by a central stalk formed by the gamma and epsilon chains, while a peripheral stalk is formed by the delta and b chains.

The protein resides in the cell membrane. Functionally, f(1)F(0) ATP synthase produces ATP from ADP in the presence of a proton or sodium gradient. F-type ATPases consist of two structural domains, F(1) containing the extramembraneous catalytic core and F(0) containing the membrane proton channel, linked together by a central stalk and a peripheral stalk. During catalysis, ATP synthesis in the catalytic domain of F(1) is coupled via a rotary mechanism of the central stalk subunits to proton translocation. Component of the F(0) channel, it forms part of the peripheral stalk, linking F(1) to F(0). The sequence is that of ATP synthase subunit b from Streptococcus suis (strain 98HAH33).